The primary structure comprises 457 residues: MDHLPIFCQLRDRDCLIVGGGDVAERKARLMLEAGARLTVNALTFIPQFTVWANEGMLTLVEGPFDETLLDSCWLAIAATDDDTVNQRVSDAAESRRIFCNVVDAPKAASFIMPSIIDRSPLMVAVSSGGTSPVLARLLREKLESLLPQHLGQVARYAGQLRARVKKQFATMGERRRFWEKFFVNDRLAQSLANADEKAVNATTERLFSEPLDHRGEVVLVGAGPGDAGLLTLKGLQQIQQADIVVYDRLVSDDIMNLVRRDADRVFVGKRAGYHCVPQEEINQILLREAQKGKRVVRLKGGDPFIFGRGGEELETLCHAGIPFSVVPGITAASGCSAYSGIPLTHRDYAQSVRLVTGHLKTGGELDWENLAAEKQTLVFYMGLNQAATIQEKLIAFGMQADMPVALVENGTSVKQRVVHGVLTQLGELAQQVESPALIIVGRVVGLRDKLNWFSNY.

The precorrin-2 dehydrogenase /sirohydrochlorin ferrochelatase stretch occupies residues 1 to 204; that stretch reads MDHLPIFCQL…ADEKAVNATT (204 aa). NAD(+)-binding positions include 22-23 and 43-44; these read DV and LT. Ser-128 bears the Phosphoserine mark. A uroporphyrinogen-III C-methyltransferase region spans residues 216-457; sequence GEVVLVGAGP…RDKLNWFSNY (242 aa). Residue Pro-225 coordinates S-adenosyl-L-methionine. Asp-248 serves as the catalytic Proton acceptor. Lys-270 (proton donor) is an active-site residue. S-adenosyl-L-methionine contacts are provided by residues 301–303, Ile-306, 331–332, Met-382, and Gly-411; these read GGD and TA.

It in the N-terminal section; belongs to the precorrin-2 dehydrogenase / sirohydrochlorin ferrochelatase family. The protein in the C-terminal section; belongs to the precorrin methyltransferase family.

The enzyme catalyses uroporphyrinogen III + 2 S-adenosyl-L-methionine = precorrin-2 + 2 S-adenosyl-L-homocysteine + H(+). The catalysed reaction is precorrin-2 + NAD(+) = sirohydrochlorin + NADH + 2 H(+). It catalyses the reaction siroheme + 2 H(+) = sirohydrochlorin + Fe(2+). It functions in the pathway cofactor biosynthesis; adenosylcobalamin biosynthesis; precorrin-2 from uroporphyrinogen III: step 1/1. The protein operates within cofactor biosynthesis; adenosylcobalamin biosynthesis; sirohydrochlorin from precorrin-2: step 1/1. It participates in porphyrin-containing compound metabolism; siroheme biosynthesis; precorrin-2 from uroporphyrinogen III: step 1/1. Its pathway is porphyrin-containing compound metabolism; siroheme biosynthesis; siroheme from sirohydrochlorin: step 1/1. It functions in the pathway porphyrin-containing compound metabolism; siroheme biosynthesis; sirohydrochlorin from precorrin-2: step 1/1. Its function is as follows. Multifunctional enzyme that catalyzes the SAM-dependent methylations of uroporphyrinogen III at position C-2 and C-7 to form precorrin-2 via precorrin-1. Then it catalyzes the NAD-dependent ring dehydrogenation of precorrin-2 to yield sirohydrochlorin. Finally, it catalyzes the ferrochelation of sirohydrochlorin to yield siroheme. This chain is Siroheme synthase, found in Salmonella gallinarum (strain 287/91 / NCTC 13346).